The sequence spans 583 residues: Leucine aminopeptidase 2, chloroplastic (583 aa).

A chloroplast-targeting transit peptide spans 1–70 (MAVTLVTSFA…ISHATLGLTQ (70 aa)). Lys351 and Asp356 together coordinate Mn(2+). Residue Lys363 is part of the active site. Positions 376, 436, and 438 each coordinate Mn(2+). Arg440 is a catalytic residue.

This sequence belongs to the peptidase M17 family. Homohexamer (dimer of homotrimers). The cofactor is Mn(2+).

Its subcellular location is the plastid. It is found in the chloroplast. It carries out the reaction Release of an N-terminal amino acid, Xaa-|-Yaa-, in which Xaa is preferably Leu, but may be other amino acids including Pro although not Arg or Lys, and Yaa may be Pro. Amino acid amides and methyl esters are also readily hydrolyzed, but rates on arylamides are exceedingly low.. The enzyme catalyses Release of N-terminal proline from a peptide.. In terms of biological role, presumably involved in the processing and regular turnover of intracellular proteins. Catalyzes the removal of unsubstituted N-terminal amino acids from various peptides. Possesses leucine aminopeptidase activity against the model substrate leucine-amido methyl coumarin. Does not seem to possess Cys-Gly dipeptidase activity. Functionally, functions as a molecular chaperone to protect proteins from heat-induced damage. In Arabidopsis thaliana (Mouse-ear cress), this protein is Leucine aminopeptidase 2, chloroplastic.